Here is a 620-residue protein sequence, read N- to C-terminus: Two-component response regulator ORR27 (620 aa).

The 115-residue stretch at 24-138 (HVLVVDDDAA…AIKFIWKHVL (115 aa)) folds into the Response regulatory domain. A 4-aspartylphosphate modification is found at aspartate 76. 2 disordered regions span residues 171–197 (PPAV…AELS) and 215–257 (VWSS…LEAT). Positions 261–321 (KKVRTRFTWT…HLQKYRSWLE (61 aa)) form a DNA-binding region, myb-like GARP. Residues 431-456 (SVSRDAHENGNSQARGSAMSNGTSGT) show a composition bias toward polar residues. Disordered stretches follow at residues 431–457 (SVSR…SGTR), 501–523 (SDQN…NSKT), and 596–620 (PPRG…SSGP). Residues 603–620 (EIASHENTNGKNGASSGP) show a composition bias toward polar residues.

It belongs to the ARR family. Type-B subfamily. Post-translationally, two-component system major event consists of a His-to-Asp phosphorelay between a sensor histidine kinase (HK) and a response regulator (RR). In plants, the His-to-Asp phosphorelay involves an additional intermediate named Histidine-containing phosphotransfer protein (HPt). This multistep phosphorelay consists of a His-Asp-His-Asp sequential transfer of a phosphate group between first a His and an Asp of the HK protein, followed by the transfer to a conserved His of the HPt protein and finally the transfer to an Asp in the receiver domain of the RR protein.

It is found in the nucleus. Its function is as follows. Transcriptional activator that binds specific DNA sequence. Functions as a response regulator involved in His-to-Asp phosphorelay signal transduction system. Phosphorylation of the Asp residue in the receiver domain activates the ability of the protein to promote the transcription of target genes. May directly activate some type-A response regulators in response to cytokinins. This is Two-component response regulator ORR27 from Oryza sativa subsp. japonica (Rice).